A 530-amino-acid chain; its full sequence is Glutamate--cysteine ligase (530 aa).

Belongs to the glutamate--cysteine ligase type 1 family. Type 1 subfamily.

It carries out the reaction L-cysteine + L-glutamate + ATP = gamma-L-glutamyl-L-cysteine + ADP + phosphate + H(+). The protein operates within sulfur metabolism; glutathione biosynthesis; glutathione from L-cysteine and L-glutamate: step 1/2. The sequence is that of Glutamate--cysteine ligase from Saccharophagus degradans (strain 2-40 / ATCC 43961 / DSM 17024).